Here is a 126-residue protein sequence, read N- to C-terminus: MNQLAASVSVDVQTAYIETQSSPDEDKYLFSYTITISNLSNEAITLKSRHWCITDADGRKSEVHGTGVVGETPTIKPNSSYEYTSGTVLETPLGVMEGSYTMVDSDGNEFEAPISAFRLSIPGLLH.

The ApaG domain occupies N2–H126.

The chain is Protein ApaG from Shewanella pealeana (strain ATCC 700345 / ANG-SQ1).